The chain runs to 130 residues: uncharacterized protein (130 aa).

This is an uncharacterized protein from Acanthamoeba polyphaga mimivirus (APMV).